A 725-amino-acid chain; its full sequence is MLKTKRKLTKAIGVALSISILSSLVSFIPQTNTYAAGTYNYGEALQKSIMFYEFQRSGDLPADKRDNWRDDSGMKDGSDVGVDLTGGWYDAGDHVKFNLPMSYTSAMLAWSLYEDKDAYDKSGQTKYIMDGIKWANDYFIKCNPTPGVYYYQVGDGGKDHSWWGPAEVMQMERPSFKVDASKPGSAVCASTAASLASAAVVFKSSDPTYAEKCISHAKNLFDMADKAKSDAGYTAASGYYSSSSFYDDLSWAAVWLYLATNDSTYLDKAESYVPNWGKEQQTDIIAYKWGQCWDDVHYGAELLLAKLTNKQLYKDSIEMNLDFWTTGVNGTRVSYTPKGLAWLFQWGSLRHATTQAFLAGVYAEWEGCTPSKVSVYKDFLKSQIDYALGSTGRSFVVGYGVNPPQHPHHRTAHGSWTDQMTSPTYHRHTIYGALVGGPDNADGYTDEINNYVNNEIACDYNAGFTGALAKMYKHSGGDPIPNFKAIEKITNDEVIIKAGLNSTGPNYTEIKAVVYNQTGWPARVTDKISFKYFMDLSEIVAAGIDPLSLVTSSNYSEGKNTKVSGVLPWDVSNNVYYVNVDLTGENIYPGGQSACRREVQFRIAAPQGTTYWNPKNDFSYDGLPTTSTVNTVTNIPVYDNGVKVFGNEPAGGSENPDPEILYGDVNSDKNVDALDFAALKKYLLGGTSSIDVKAADTYKDGNIDAIDMATLKKYLLGTITQLPQG.

An N-terminal signal peptide occupies residues Met1–Ala35. Catalysis depends on Asp93, which acts as the Nucleophile. Residues His408, Asp446, and Glu455 contribute to the active site. A CBM3 domain is found at Ile489 to Ala650. One can recognise a Dockerin domain in the interval Pro658–Gln724.

Belongs to the glycosyl hydrolase 9 (cellulase E) family.

It catalyses the reaction Endohydrolysis of (1-&gt;4)-beta-D-glucosidic linkages in cellulose, lichenin and cereal beta-D-glucans.. Its pathway is glycan metabolism; cellulose degradation. Its function is as follows. The biological conversion of cellulose to glucose generally requires three types of hydrolytic enzymes: (1) Endoglucanases which cut internal beta-1,4-glucosidic bonds; (2) Exocellobiohydrolases that cut the disaccharide cellobiose from the non-reducing end of the cellulose polymer chain; (3) Beta-1,4-glucosidases which hydrolyze the cellobiose and other short cello-oligosaccharides to glucose. This Ruminiclostridium cellulolyticum (strain ATCC 35319 / DSM 5812 / JCM 6584 / H10) (Clostridium cellulolyticum) protein is Endoglucanase G (celCCG).